A 943-amino-acid chain; its full sequence is Neutral alpha-glucosidase AB (943 aa).

A signal peptide spans methionine 1 to serine 23. The tract at residues phenylalanine 186–threonine 231 is disordered. A compositionally biased stretch (basic and acidic residues) spans proline 198–asparagine 211. The Nucleophile role is filled by aspartate 540. Residue glutamate 543 is part of the active site. Aspartate 617 functions as the Proton donor in the catalytic mechanism. N-linked (GlcNAc...) asparagine glycosylation is found at asparagine 878, asparagine 887, and asparagine 907.

The protein belongs to the glycosyl hydrolase 31 family.

The protein resides in the endoplasmic reticulum. It is found in the golgi apparatus. The catalysed reaction is N(4)-(alpha-D-Glc-(1-&gt;3)-alpha-D-Man-(1-&gt;2)-alpha-D-Man-(1-&gt;2)-alpha-D-Man-(1-&gt;3)-[alpha-D-Man-(1-&gt;2)-alpha-D-Man-(1-&gt;3)-[alpha-D-Man-(1-&gt;2)-alpha-D-Man-(1-&gt;6)]-alpha-D-Man-(1-&gt;6)]-beta-D-Man-(1-&gt;4)-beta-D-GlcNAc-(1-&gt;4)-beta-D-GlcNAc)-L-asparaginyl-[protein] + H2O = N(4)-(alpha-D-Man-(1-&gt;2)-alpha-D-Man-(1-&gt;2)-alpha-D-Man-(1-&gt;3)-[alpha-D-Man-(1-&gt;2)-alpha-D-Man-(1-&gt;3)-[alpha-D-Man-(1-&gt;2)-alpha-D-Man-(1-&gt;6)]-alpha-D-Man-(1-&gt;6)]-beta-D-Man-(1-&gt;4)-beta-D-GlcNAc-(1-&gt;4)-beta-D-GlcNAc)-L-asparaginyl-[protein] (N-glucan mannose isomer 9A1,2,3B1,2,3) + beta-D-glucose. It carries out the reaction N(4)-(alpha-D-Glc-(1-&gt;3)-alpha-D-Glc-(1-&gt;3)-alpha-D-Man-(1-&gt;2)-alpha-D-Man-(1-&gt;2)-alpha-D-Man-(1-&gt;3)-[alpha-D-Man-(1-&gt;2)-alpha-D-Man-(1-&gt;3)-[alpha-D-Man-(1-&gt;2)-alpha-D-Man-(1-&gt;6)]-alpha-D-Man-(1-&gt;6)]-beta-D-Man-(1-&gt;4)-beta-D-GlcNAc-(1-&gt;4)-beta-D-GlcNAc)-L-asparaginyl-[protein] + H2O = N(4)-(alpha-D-Glc-(1-&gt;3)-alpha-D-Man-(1-&gt;2)-alpha-D-Man-(1-&gt;2)-alpha-D-Man-(1-&gt;3)-[alpha-D-Man-(1-&gt;2)-alpha-D-Man-(1-&gt;3)-[alpha-D-Man-(1-&gt;2)-alpha-D-Man-(1-&gt;6)]-alpha-D-Man-(1-&gt;6)]-beta-D-Man-(1-&gt;4)-beta-D-GlcNAc-(1-&gt;4)-beta-D-GlcNAc)-L-asparaginyl-[protein] + beta-D-glucose. The protein operates within glycan metabolism; N-glycan metabolism. Its function is as follows. Cleaves sequentially the 2 innermost alpha-1,3-linked glucose residues from N-linked oligosaccharides on newly synthesized glycoproteins. The chain is Neutral alpha-glucosidase AB (modA) from Dictyostelium discoideum (Social amoeba).